The chain runs to 350 residues: Protein O-mannose kinase (350 aa).

Methionine 1 carries the post-translational modification N-acetylmethionine. Residues 1-20 (MEKQPQNSRRGLAPREVPPA) are Cytoplasmic-facing. A helical; Signal-anchor for type II membrane protein transmembrane segment spans residues 21–43 (VGLLLIMALMNTLLYLCLDHFFI). Residues 44–350 (APRQSTVDPT…AMMSQAREML (307 aa)) lie on the Lumenal side of the membrane. Positions 81–350 (VRQLKRVGEG…AMMSQAREML (270 aa)) constitute a Protein kinase domain. N-linked (GlcNAc...) asparagine glycans are attached at residues asparagine 165, asparagine 220, and asparagine 235.

This sequence belongs to the protein kinase superfamily. Ser/Thr protein kinase family. STKL subfamily. In terms of tissue distribution, highest expression is observed in brain, skeletal muscle, kidney and heart in fetal and adult tissues.

The protein localises to the endoplasmic reticulum membrane. It catalyses the reaction 3-O-[beta-D-GalNAc-(1-&gt;3)-beta-D-GlcNAc-(1-&gt;4)-alpha-D-Man]-L-Thr-[protein] + ATP = 3-O-[beta-D-GalNAc-(1-&gt;3)-beta-D-GlcNAc-(1-&gt;4)-(O-6-P-alpha-D-Man)]-Thr-[protein] + ADP + H(+). Protein O-mannose kinase that specifically mediates phosphorylation at the 6-position of an O-mannose of the trisaccharide (N-acetylgalactosamine (GalNAc)-beta-1,3-N-acetylglucosamine (GlcNAc)-beta-1,4-mannose) to generate phosphorylated O-mannosyl trisaccharide (N-acetylgalactosamine-beta-1,3-N-acetylglucosamine-beta-1,4-(phosphate-6-)mannose). Phosphorylated O-mannosyl trisaccharide is a carbohydrate structure present in alpha-dystroglycan (DAG1), which is required for binding laminin G-like domain-containing extracellular proteins with high affinity. Only shows kinase activity when the GalNAc-beta-3-GlcNAc-beta-terminus is linked to the 4-position of O-mannose, suggesting that this disaccharide serves as the substrate recognition motif. The sequence is that of Protein O-mannose kinase (POMK) from Homo sapiens (Human).